Here is a 71-residue protein sequence, read N- to C-terminus: Sec-independent protein translocase protein TatA (71 aa).

Residues 1–21 (MGSFSMWHWLIVLAIVLLLFG) form a helical membrane-spanning segment. Residues 40–71 (KKGMSDDDTAPDGTPKPADQSKTVDHRADDHK) are disordered. A compositionally biased stretch (basic and acidic residues) spans 61–71 (KTVDHRADDHK).

This sequence belongs to the TatA/E family. As to quaternary structure, the Tat system comprises two distinct complexes: a TatABC complex, containing multiple copies of TatA, TatB and TatC subunits, and a separate TatA complex, containing only TatA subunits. Substrates initially bind to the TatABC complex, which probably triggers association of the separate TatA complex to form the active translocon.

It is found in the cell inner membrane. Its function is as follows. Part of the twin-arginine translocation (Tat) system that transports large folded proteins containing a characteristic twin-arginine motif in their signal peptide across membranes. TatA could form the protein-conducting channel of the Tat system. This is Sec-independent protein translocase protein TatA from Allorhizobium ampelinum (strain ATCC BAA-846 / DSM 112012 / S4) (Agrobacterium vitis (strain S4)).